The primary structure comprises 430 residues: Functional amyloid transporter FapF (430 aa).

Positions 1 to 24 (MHRSLSLRAVVCLSTLLPASLLYA) are cleaved as a signal peptide. The Periplasmic portion of the chain corresponds to 25–131 (APDVDIETLK…EASGFFGNGK (107 aa)). The stretch at 29 to 64 (DIETLKQELLELKQRYEAQQKALAVLEQRVRQVEDQ) forms a coiled coil. Positions 62–114 (EDQPATPAPKRLAKSPADFKQSGSTVAASSGTGGATGGSSYGQSLKDDSEPAQ) are disordered. The segment covering 92–101 (GTGGATGGSS) has biased composition (gly residues). An alpha helical plug region spans residues 113 to 125 (AQSVSNLYNEASG). The beta stranded transmembrane segment at 132–142 (FSFETGITYAR) threads the bilayer. The Extracellular portion of the chain corresponds to 143-172 (YDARQLTLNGFLALDSIFLGNINLDRIKAD). A beta stranded membrane pass occupies residues 173 to 183 (NWTLDLTGRYN). Topologically, residues 184 to 189 (LDNRWQ) are periplasmic. Residues 190–198 (FDVNVPVVY) traverse the membrane as a beta stranded segment. The Extracellular portion of the chain corresponds to 199–224 (RESTYQSGGASGGDPQATSEESVSRD). The interval 203–223 (YQSGGASGGDPQATSEESVSR) is disordered. The chain crosses the membrane as a beta stranded span at residues 225–238 (PTIGDVNFGIAYKF). Residues 239-246 (LDESATMP) lie on the Periplasmic side of the membrane. Residues 247-256 (DAVVSVRVKA) traverse the membrane as a beta stranded segment. The Extracellular portion of the chain corresponds to 257–288 (PTGKEPFGIKLVRSTANDNLYVPESLPTGNGV). The chain crosses the membrane as a beta stranded span at residues 289–298 (WSITPGLSLV). The Periplasmic segment spans residues 299–304 (KTFDPA). Residues 305 to 314 (VLFGSVSYTH) traverse the membrane as a beta stranded segment. At 315-339 (NLEDSFDDISSDVNQKVGGKVRLGD) the chain is on the extracellular side. The chain crosses the membrane as a beta stranded span at residues 340-348 (SFQFGVGVA). At 349–356 (FALNERMS) the chain is on the periplasmic side. A beta stranded membrane pass occupies residues 357-365 (MSFSVSDLI). At 366-386 (QRKSKLKPDGGGWQSIVSSDA) the chain is on the extracellular side. The beta stranded transmembrane segment at 387–397 (NAGYFNVGMTI) threads the bilayer. Over 398 to 404 (AASENLT) the chain is Periplasmic. The chain crosses the membrane as a beta stranded span at residues 405–412 (IVPNLAIG). The Extracellular segment spans residues 413–419 (MTDDAPD). Residues 420–428 (FTFSLKFPY) traverse the membrane as a beta stranded segment. Residues 429-430 (YF) lie on the Periplasmic side of the membrane.

The protein belongs to the amyloid transporter (TC 9.B.153) family. Homotrimer.

Its subcellular location is the cell outer membrane. Functionally, transports fibril components across the outer membrane. Upon overexpression of the endogenous six-gene locus (fapA-fapF) in situ cells form large clumps during liquid growth, make large amounts of biofilm and produce amyloid fibrils. Expression of the 6 gene operon in E.coli strain BL21(DE3) induces flocculation and biofilm formation with copious extracellular fibrils. The chain is Functional amyloid transporter FapF from Pseudomonas fluorescens.